The chain runs to 89 residues: Small ribosomal subunit protein uS15 (89 aa).

Belongs to the universal ribosomal protein uS15 family. As to quaternary structure, part of the 30S ribosomal subunit. Forms a bridge to the 50S subunit in the 70S ribosome, contacting the 23S rRNA.

Functionally, one of the primary rRNA binding proteins, it binds directly to 16S rRNA where it helps nucleate assembly of the platform of the 30S subunit by binding and bridging several RNA helices of the 16S rRNA. Forms an intersubunit bridge (bridge B4) with the 23S rRNA of the 50S subunit in the ribosome. The protein is Small ribosomal subunit protein uS15 of Porphyromonas gingivalis (strain ATCC 33277 / DSM 20709 / CIP 103683 / JCM 12257 / NCTC 11834 / 2561).